Consider the following 299-residue polypeptide: Fluorinase (299 aa).

S-adenosyl-L-methionine contacts are provided by residues Asp-16, 21–23 (DDS), Tyr-77, Ser-158, Asp-210, Asn-215, 269–270 (SR), and 277–279 (RNA).

Homohexamer; dimers of trimer.

It catalyses the reaction fluoride + S-adenosyl-L-methionine = 5'-deoxy-5'-fluoroadenosine + L-methionine. Its activity is regulated as follows. Competitively inhibited by S-adenosyl-L-homocysteine (AdoHcy) and S-adenosyl-L-homocysteine (SAH). Sinefungin is only weakly inhibitory. Involved in the biosynthesis of fluorometabolites. Catalyzes the formation of a C-F bond by combining S-adenosyl-L-methionine (SAM) and fluoride to generate 5'-fluoro-5'-deoxyadenosine (5'-FDA) and L-methionine. It can also use 2'-deoxyadenosine in place of adenosine as substrate. The chain is Fluorinase from Streptantibioticus cattleyicolor (Streptomyces cattleya).